The chain runs to 296 residues: 4-hydroxy-tetrahydrodipicolinate synthase (296 aa).

Position 45 (Thr45) interacts with pyruvate. Tyr133 serves as the catalytic Proton donor/acceptor. Lys161 acts as the Schiff-base intermediate with substrate in catalysis. Position 203 (Ile203) interacts with pyruvate.

Belongs to the DapA family. As to quaternary structure, homotetramer; dimer of dimers.

The protein localises to the cytoplasm. The enzyme catalyses L-aspartate 4-semialdehyde + pyruvate = (2S,4S)-4-hydroxy-2,3,4,5-tetrahydrodipicolinate + H2O + H(+). Its pathway is amino-acid biosynthesis; L-lysine biosynthesis via DAP pathway; (S)-tetrahydrodipicolinate from L-aspartate: step 3/4. Functionally, catalyzes the condensation of (S)-aspartate-beta-semialdehyde [(S)-ASA] and pyruvate to 4-hydroxy-tetrahydrodipicolinate (HTPA). In Idiomarina loihiensis (strain ATCC BAA-735 / DSM 15497 / L2-TR), this protein is 4-hydroxy-tetrahydrodipicolinate synthase.